The following is a 165-amino-acid chain: Small ribosomal subunit protein eS10 (165 aa).

Residues 92 to 165 (ATLRRSRPET…FGRGRGQAPQ (74 aa)) form a disordered region. Residues 97 to 128 (SRPETGRPRPKGLEGERPPRLPRGETDRDTYR) are compositionally biased toward basic and acidic residues. Residues 142–153 (AGAGAATEFQFR) show a composition bias toward low complexity. Positions 154 to 165 (GGFGRGRGQAPQ) are enriched in gly residues.

This sequence belongs to the eukaryotic ribosomal protein eS10 family. Component of the small ribosomal subunit.

Its subcellular location is the cytoplasm. The protein localises to the nucleus. It localises to the nucleolus. In terms of biological role, component of the 40S ribosomal subunit. The ribosome is a large ribonucleoprotein complex responsible for the synthesis of proteins in the cell. In Xenopus laevis (African clawed frog), this protein is Small ribosomal subunit protein eS10 (rps10).